Here is a 303-residue protein sequence, read N- to C-terminus: Sulfotransferase 6B1 (303 aa).

65-70 (KCGSNW) provides a ligand contact to 3'-phosphoadenylyl sulfate. H118 functions as the Proton acceptor in the catalytic mechanism. 3'-phosphoadenylyl sulfate contacts are provided by residues R140, S148, Y203, 237 to 242 (STFLAM), and 259 to 261 (RKG).

The protein belongs to the sulfotransferase 1 family. Expressed in brain, heart, kidney, thymus, lung, liver and testis.

The protein resides in the cytoplasm. The protein localises to the cytosol. The catalysed reaction is thyroxine + 3'-phosphoadenylyl sulfate = thyroxine sulfate + adenosine 3',5'-bisphosphate + H(+). Functionally, sulfotransferase that utilizes 3'-phospho-5'-adenylyl sulfate (PAPS) as sulfonate donor to catalyze the sulfate conjugation of thyroxine. Involved in the metabolism of thyroxine. This Mus musculus (Mouse) protein is Sulfotransferase 6B1 (Sult6b1).